The primary structure comprises 421 residues: MSKATEQNDKLKRAIIISAVLHVILFAALIWSSFDENIEASAGGGGGSSIDAVMVDSGAVVEQYKRMQSQESSAKRSDEQRKMKEQQAAEELREKQAAEQERLKQLEKERLAAQEQKKQAEEAAKQAELKQKQAEEAAAKAAADAKAKAEADAKAAEEAAKKAAADAKKKAEAEAAKAAAEAQKKAEAAAAALKKKAEAAEAAAAEARKKAATEAAEKAKAEAEKKAAAEKAAADKKAAAEKAAADKKAAEKAAAEKAAADKKAAAEKAAADKKAAAAKAAAEKAAAAKAAAEADDIFGELSSGKNAPKTGGGAKGNNASPAGSGNTKNNGASGADINNYAGQIKSAIESKFYDASSYAGKTCTLRIKLAPDGMLLDIKPEGGDPALCQAALAAAKLAKIPKPPSQAVYEVFKNAPLDFKP.

The Cytoplasmic portion of the chain corresponds to 1–13 (MSKATEQNDKLKR). The helical transmembrane segment at 14–34 (AIIISAVLHVILFAALIWSSF) threads the bilayer. Topologically, residues 35–421 (DENIEASAGG…FKNAPLDFKP (387 aa)) are periplasmic. The domain II (alpha-helical) stretch occupies residues 48–310 (SSIDAVMVDS…LSSGKNAPKT (263 aa)). Residues 65-266 (KRMQSQESSA…KAAADKKAAA (202 aa)) are disordered. Composition is skewed to basic and acidic residues over residues 73–175 (SAKR…EAEA) and 206–266 (EARK…KAAA). A run of 13 repeats spans residues 224-229 (EKKAAA), 230-234 (EKAAA), 235-240 (DKKAAA), 241-245 (EKAAA), 246-250 (DKKAA), 251-255 (EKAAA), 256-260 (EKAAA), 261-266 (DKKAAA), 267-271 (EKAAA), 272-277 (DKKAAA), 278-282 (AKAAA), 283-287 (EKAAA), and 288-292 (AKAAA). Positions 224–292 (EKKAAAEKAA…EKAAAAKAAA (69 aa)) are 13 X tandem repeats of [EDA]-K(1,2)-A(2,4). The interval 300 to 336 (ELSSGKNAPKTGGGAKGNNASPAGSGNTKNNGASGAD) is disordered. A domain III (functional) region spans residues 311–421 (GGGAKGNNAS…FKNAPLDFKP (111 aa)). The span at 317-332 (NNASPAGSGNTKNNGA) shows a compositional bias: polar residues. Cysteines 363 and 388 form a disulfide.

Belongs to the TolA family. The Tol-Pal system is composed of five core proteins: the inner membrane proteins TolA, TolQ and TolR, the periplasmic protein TolB and the outer membrane protein Pal. They form a network linking the inner and outer membranes and the peptidoglycan layer. TolA interacts with TolQ and TolR via its N-terminal domain. Interacts with CpoB, and with the trimeric porins OmpC, OmpF, PhoE and LamB via its central domain. Interacts with TolB via its C-terminal domain. Also interacts with Pal via its C-terminal domain. This interaction is proton motive force dependent and requires TolQ and TolR.

The protein localises to the cell inner membrane. Its function is as follows. Part of the Tol-Pal system, which plays a role in outer membrane invagination during cell division and is important for maintaining outer membrane integrity. The Tol-Pal system is also required for polar localization of chemoreceptors clusters. The system also appears to be required for the activity of several outer membrane-localized enzymes with cell wall remodeling activity. Is involved in the uptake of group A colicins (colicins A, E1, E2, E3, and K) and in the uptake of filamentous phage DNA. The sequence is that of Tol-Pal system protein TolA from Escherichia coli (strain K12).